The following is a 375-amino-acid chain: Probable cytochrome c oxidase subunit 2 (375 aa).

Helical transmembrane passes span 36 to 56 (LAVS…DNVW), 80 to 100 (IIAA…TVVF), and 122 to 142 (LTYT…TVVV). Residues histidine 264, cysteine 305, cysteine 309, and histidine 313 each contribute to the Cu cation site. A compositionally biased stretch (polar residues) spans 353–363 (VATSTRPFNTD). The disordered stretch occupies residues 353 to 375 (VATSTRPFNTDRTVKSAAAPEAE).

This sequence belongs to the cytochrome c oxidase subunit 2 family. Requires Cu cation as cofactor. The cofactor is heme.

The protein resides in the cell membrane. It catalyses the reaction 4 Fe(II)-[cytochrome c] + O2 + 8 H(+)(in) = 4 Fe(III)-[cytochrome c] + 2 H2O + 4 H(+)(out). Subunits I and II form the functional core of the enzyme complex. Electrons originating in cytochrome c are transferred via heme a and Cu(A) to the binuclear center formed by heme a3 and Cu(B). This is Probable cytochrome c oxidase subunit 2 (ctaC) from Nocardia farcinica (strain IFM 10152).